Reading from the N-terminus, the 494-residue chain is Histidine--tRNA ligase (494 aa).

Residues 1–20 are disordered; the sequence is MAKDQKKQPRPKAETPKGFR.

This sequence belongs to the class-II aminoacyl-tRNA synthetase family. As to quaternary structure, homodimer.

The protein resides in the cytoplasm. It carries out the reaction tRNA(His) + L-histidine + ATP = L-histidyl-tRNA(His) + AMP + diphosphate + H(+). The polypeptide is Histidine--tRNA ligase (Paracoccus denitrificans (strain Pd 1222)).